The primary structure comprises 282 residues: 3-methyl-2-oxobutanoate hydroxymethyltransferase (282 aa).

Positions 44 and 83 each coordinate Mg(2+). Residues D44–S45, D83, and K112 contribute to the 3-methyl-2-oxobutanoate site. A Mg(2+)-binding site is contributed by E114. The Proton acceptor role is filled by E181.

The protein belongs to the PanB family. Homodecamer; pentamer of dimers. It depends on Mg(2+) as a cofactor.

Its subcellular location is the cytoplasm. It catalyses the reaction 3-methyl-2-oxobutanoate + (6R)-5,10-methylene-5,6,7,8-tetrahydrofolate + H2O = 2-dehydropantoate + (6S)-5,6,7,8-tetrahydrofolate. It participates in cofactor biosynthesis; coenzyme A biosynthesis. Catalyzes the reversible reaction in which hydroxymethyl group from 5,10-methylenetetrahydrofolate is transferred onto alpha-ketoisovalerate to form ketopantoate. This is 3-methyl-2-oxobutanoate hydroxymethyltransferase from Pyrococcus abyssi (strain GE5 / Orsay).